Here is a 270-residue protein sequence, read N- to C-terminus: Aliphatic sulfonates import ATP-binding protein SsuB (270 aa).

An ABC transporter domain is found at 17-238; it reads LASSGLRKTF…ARGSHRLAAL (222 aa). Residue 49 to 56 coordinates ATP; it reads GRSGCGKS. Residues 249–270 are disordered; sequence APGAAPEPDPVAPLPTQLRWAH.

The protein belongs to the ABC transporter superfamily. Aliphatic sulfonates importer (TC 3.A.1.17.2) family. The complex is composed of two ATP-binding proteins (SsuB), two transmembrane proteins (SsuC) and a solute-binding protein (SsuA).

Its subcellular location is the cell inner membrane. The enzyme catalyses ATP + H2O + aliphatic sulfonate-[sulfonate-binding protein]Side 1 = ADP + phosphate + aliphatic sulfonateSide 2 + [sulfonate-binding protein]Side 1.. In terms of biological role, part of the ABC transporter complex SsuABC involved in aliphatic sulfonates import. Responsible for energy coupling to the transport system. This is Aliphatic sulfonates import ATP-binding protein SsuB from Pseudomonas putida (Arthrobacter siderocapsulatus).